Here is a 631-residue protein sequence, read N- to C-terminus: UvrABC system protein C (631 aa).

The tract at residues 1-20 (MKNETEAVADQPPKTGPVKP) is disordered. The region spanning 34-112 (MSPGVYRMLD…IKQLKPKFNV (79 aa)) is the GIY-YIG domain. The 36-residue stretch at 222–257 (TDLQRQLADGMAAASEAMEFERAAALRDRIRALTNV) folds into the UVR domain.

This sequence belongs to the UvrC family. Interacts with UvrB in an incision complex.

It is found in the cytoplasm. Functionally, the UvrABC repair system catalyzes the recognition and processing of DNA lesions. UvrC both incises the 5' and 3' sides of the lesion. The N-terminal half is responsible for the 3' incision and the C-terminal half is responsible for the 5' incision. This is UvrABC system protein C from Jannaschia sp. (strain CCS1).